Consider the following 295-residue polypeptide: Putative attaching and effacing protein homolog (295 aa).

Residues 1–25 (MSHYKTGHKQPRFRYSVLARCVAWA) form the signal peptide.

This sequence belongs to the intimin/invasin family.

The sequence is that of Putative attaching and effacing protein homolog (eaeH) from Escherichia coli (strain K12).